Reading from the N-terminus, the 107-residue chain is Ferredoxin 1 (107 aa).

4Fe-4S ferredoxin-type domains follow at residues 2-30 and 31-60; these read TFVV…YEGP and NFLV…SEDE. 2 residues coordinate [3Fe-4S] cluster: C9 and C17. 4 residues coordinate [4Fe-4S] cluster: C21, C40, C43, and C46. A [3Fe-4S] cluster-binding site is contributed by C50.

Requires [4Fe-4S] cluster as cofactor. The cofactor is [3Fe-4S] cluster.

Ferredoxins are iron-sulfur proteins that transfer electrons in a wide variety of metabolic reactions. This chain is Ferredoxin 1 (fdxA), found in Pseudomonas aeruginosa (strain ATCC 15692 / DSM 22644 / CIP 104116 / JCM 14847 / LMG 12228 / 1C / PRS 101 / PAO1).